The primary structure comprises 742 residues: Phosphoribosylformylglycinamidine synthase subunit PurL (742 aa).

H54 is an active-site residue. The ATP site is built by Y57 and K96. Residue E98 participates in Mg(2+) binding. Residues 99–102 (SHNH) and R121 each bind substrate. H100 acts as the Proton acceptor in catalysis. Residue D122 coordinates Mg(2+). Residue Q245 coordinates substrate. D273 serves as a coordination point for Mg(2+). Position 317-319 (317-319 (ESQ)) interacts with substrate. Residues D500 and G537 each contribute to the ATP site. N538 serves as a coordination point for Mg(2+). S540 is a substrate binding site.

This sequence belongs to the FGAMS family. In terms of assembly, monomer. Part of the FGAM synthase complex composed of 1 PurL, 1 PurQ and 2 PurS subunits.

It localises to the cytoplasm. It carries out the reaction N(2)-formyl-N(1)-(5-phospho-beta-D-ribosyl)glycinamide + L-glutamine + ATP + H2O = 2-formamido-N(1)-(5-O-phospho-beta-D-ribosyl)acetamidine + L-glutamate + ADP + phosphate + H(+). Its pathway is purine metabolism; IMP biosynthesis via de novo pathway; 5-amino-1-(5-phospho-D-ribosyl)imidazole from N(2)-formyl-N(1)-(5-phospho-D-ribosyl)glycinamide: step 1/2. Part of the phosphoribosylformylglycinamidine synthase complex involved in the purines biosynthetic pathway. Catalyzes the ATP-dependent conversion of formylglycinamide ribonucleotide (FGAR) and glutamine to yield formylglycinamidine ribonucleotide (FGAM) and glutamate. The FGAM synthase complex is composed of three subunits. PurQ produces an ammonia molecule by converting glutamine to glutamate. PurL transfers the ammonia molecule to FGAR to form FGAM in an ATP-dependent manner. PurS interacts with PurQ and PurL and is thought to assist in the transfer of the ammonia molecule from PurQ to PurL. In Geobacillus kaustophilus (strain HTA426), this protein is Phosphoribosylformylglycinamidine synthase subunit PurL.